A 494-amino-acid chain; its full sequence is Tetracenomycin biosynthesis bifunctional cyclase/O-methyl transferase TcmN (494 aa).

The interval 11 to 140 (VNAPFELVWD…TTTRANMERI (130 aa)) is polyketide cyclase. Residue serine 67 is the Proton acceptor; for cyclase activity of the active site. Catalysis depends on proton donor; for cyclase activity residues arginine 69 and arginine 82. Positions 169-494 (LLLAASGRLA…TWTTLECRPV (326 aa)) are methyltransferase. S-adenosyl-L-methionine contacts are provided by residues aspartate 358 and 384–386 (GDF). Histidine 405 (proton acceptor; for methyltransferase activity) is an active-site residue.

This sequence in the C-terminal section; belongs to the class I-like SAM-binding methyltransferase superfamily. Cation-independent O-methyltransferase family. The tetracenomycin polyketide synthase (TCM PKS) is composed of a ketosynthase complex (TcmKL), an acyl carrier protein (TcmM), a cyclase (TcmN) and a probable second cyclase (TcmJ). TcmN is a homodimer in solution.

The enzyme catalyses 10 malonyl-CoA + 8 H(+) = tetracenomycin F2 + 10 CO2 + 10 CoA + 2 H2O. It functions in the pathway antibiotic biosynthesis; tetracenomycin C biosynthesis. Its function is as follows. Involved in the biosynthesis of tetracenomycin C (TCM C). Part of a type II polyketide synthase (PKS) that catalyzes the synthesis of tetracenomycin F2 (TCM F2), a precursor of TCM C, from malonyl-CoA. The TcmN N-terminal domain, when coupled with the other components of the PKS, catalyzes the cyclization and aromatization of the linear polyketide intermediate. Catalyzes the cyclization of the first and second rings. In addition, the C-terminal domain acts as a methyltransferase. It catalyzes the specific O-methylation of tetracenomycin D3 (TCM D3) to TCM B3, using S-adenosyl-L-methionine as the methyl donor. The polypeptide is Tetracenomycin biosynthesis bifunctional cyclase/O-methyl transferase TcmN (Streptomyces glaucescens).